A 272-amino-acid polypeptide reads, in one-letter code: Undecaprenyl-diphosphatase (272 aa).

A run of 7 helical transmembrane segments spans residues 2-22 (FDIIKAVIIGIVEGLTEFLPI), 43-63 (FINMFEYVIQFGAILAVILLY), 82-102 (WQLWAKVIIAVLPSVVVGLPL), 110-130 (LHTPLVVATTLIIYGVLFIIL), 185-205 (YVATEFSFFLAIPTMVGVSIL), 224-244 (VLMTGSIVSFLVAIVAIKWLL), and 252-272 (FKPFGWYRIALGAIVLLVMFI).

It belongs to the UppP family.

It is found in the cell membrane. The enzyme catalyses di-trans,octa-cis-undecaprenyl diphosphate + H2O = di-trans,octa-cis-undecaprenyl phosphate + phosphate + H(+). Its function is as follows. Catalyzes the dephosphorylation of undecaprenyl diphosphate (UPP). Confers resistance to bacitracin. This is Undecaprenyl-diphosphatase from Lacticaseibacillus paracasei (strain ATCC 334 / BCRC 17002 / CCUG 31169 / CIP 107868 / KCTC 3260 / NRRL B-441) (Lactobacillus paracasei).